Consider the following 546-residue polypeptide: Sterol O-acyltransferase 1 (546 aa).

Met-1 carries the N-acetylmethionine modification. The interval 1–37 (MVGEEKMSLRNRLSKSGENPEQDEAQRSVSDTQSNGR) is disordered. Over 1 to 134 (MVGEEKMSLR…LDELFEVDHI (134 aa)) the chain is Cytoplasmic. Position 8 is a phosphoserine (Ser-8). Residues 27–37 (RSVSDTQSNGR) show a composition bias toward polar residues. His-133 lines the cholesterol pocket. Residues 135-156 (RTIYHMFIGLLILFILSTLVVD) traverse the membrane as a helical segment. Residues 157–176 (YIDEGRLVLEFNLLGYAFGK) lie on the Lumenal side of the membrane. Residues 177-202 (LPTVIWTWWAMFLSTLSIPYFLFQRW) form a helical membrane-spanning segment. Over 203 to 214 (AHGYSKTSHPLI) the chain is Cytoplasmic. A helical transmembrane segment spans residues 215 to 240 (YSLSHGFFFLVFQLGILGFVPTYVVL). Residues 241 to 248 (AYTLPPAS) lie on the Lumenal side of the membrane. A helical transmembrane segment spans residues 249–272 (RFIVILEQIRMVMKAHSFVRENVP). Topologically, residues 273–315 (RVLNAAKEKSSTVPVPTVNQYLYFLFAPTLIYRDSYPRTPTVR) are cytoplasmic. Residues 316 to 348 (WGYVAVQFLQVFGCLFYVYYIFERLCAPLFRNI) traverse the membrane as a helical segment. Over 349 to 365 (KQEPFSARVLVLCVFNS) the chain is Lumenal. The chain crosses the membrane as a helical span at residues 366 to 391 (ILPGVLMLFLTFFAFLHCWLNAFAEM). The Cytoplasmic segment spans residues 392-439 (LRFGDRMFYKDWWNSTSYSNYYRTWNVVVHDWLYYYAYKDLLWFFSKR). The short motif at 399-405 (FYKDWWN) is the FYXDWWN motif element. An acyl-CoA-binding residues include Asn-411, Arg-414, Asn-417, His-421, Tyr-429, Lys-441, and Ser-452. A helical membrane pass occupies residues 440 to 464 (FKSAAMLAVFALSAVVHEYALAVCL). His-456 is an active-site residue. Over 465–470 (SYFYPV) the chain is Lumenal. Residues 471–486 (LFVLFMFFGMAFNFIV) traverse the membrane as a helical segment. Residues 487-492 (NDSRKR) are Cytoplasmic-facing. Residues 493–524 (PIWNIMVWASLFLGHGVILCFYSQEWYARQHC) form a helical membrane-spanning segment. Cys-524 and Cys-542 are disulfide-bonded. The Lumenal segment spans residues 525–546 (PLKNPTFLDYVRPRSWTCQYVF).

It belongs to the membrane-bound acyltransferase family. Sterol o-acyltransferase subfamily. May form homo- or heterodimers. Interacts with UBIAD1.

The protein localises to the endoplasmic reticulum membrane. The enzyme catalyses a sterol + a long-chain fatty acyl-CoA = a long-chain 3-hydroxysterol ester + CoA. It carries out the reaction cholesterol + an acyl-CoA = a cholesterol ester + CoA. The catalysed reaction is cholesterol + (9Z)-octadecenoyl-CoA = cholesteryl (9Z-octadecenoate) + CoA. It catalyses the reaction cholesterol + hexadecanoyl-CoA = cholesteryl hexadecanoate + CoA. The enzyme catalyses octadecanoyl-CoA + cholesterol = cholesteryl octadecanoate + CoA. It carries out the reaction (9Z,12Z)-octadecadienoyl-CoA + cholesterol = cholesteryl (9Z,12Z)-octadecadienoate + CoA. The catalysed reaction is (5Z,8Z,11Z,14Z)-eicosatetraenoyl-CoA + cholesterol = cholesteryl (5Z,8Z,11Z,14Z)-eicosatetraenoate + CoA. It catalyses the reaction (9Z)-hexadecenoyl-CoA + cholesterol = cholesteryl (9Z)-hexadecenoate + CoA. The enzyme catalyses (11Z)-octadecenoyl-CoA + cholesterol = cholesteryl (11Z)-octadecenoate + CoA. It carries out the reaction (7Z)-octadecenoyl-CoA + cholesterol = cholesteryl (7Z)-octadecenoate + CoA. Catalyzes the formation of fatty acid-cholesterol esters, which are less soluble in membranes than cholesterol. Plays a role in lipoprotein assembly and dietary cholesterol absorption. Preferentially utilizes oleoyl-CoA ((9Z)-octadecenoyl-CoA) as a substrate: shows a higher activity towards an acyl-CoA substrate with a double bond at the delta-9 position (9Z) than towards saturated acyl-CoA or an unsaturated acyl-CoA with a double bond at the delta-7 (7Z) or delta-11 (11Z) positions. The protein is Sterol O-acyltransferase 1 (SOAT1) of Cricetulus griseus (Chinese hamster).